A 1415-amino-acid chain; its full sequence is Zygote defective protein 9 (1415 aa).

TOG regions lie at residues 1–250 (MSNW…AKNA) and 251–530 (PPVA…AGPA). Residues 21-48 (DELRESKKWQERKEALEALLKVLTDNER) are a coiled coil. HEAT repeat units follow at residues 30-68 (QERKEALEALLKVLTDNERLSTKASYAELIGHLQMVLAK), 95-132 (SFAGPLLPVIFEKMKEKKPMLREPLVDCSNEVGRTMQS), 135-172 (TGQEDILAALAKPNPQIKQQTALFVARQLDLVVPAKQP), and 179-217 (VVPVFGKLTGDADQDVREASLQGLGAVQRIIGDKNVKNL). The segment at 243–278 (AEEQAKNAPPVAPTSSTPSASAASGDPSGGTATAVV) is disordered. Low complexity predominate over residues 255–276 (PTSSTPSASAASGDPSGGTATA). HEAT repeat units follow at residues 339 to 377 (ANYGALVERLQKVLEKDANINVAALAANCITGIANGLRT), 381 to 418 (PFAVSVTPIIFEKFKEKKPTLRDPLVACIDAVVATTNL), 420 to 457 (AVGEIVLAALGKPNPSIKTQTDLFLQRCFMKLNSQTMP), and 464 to 502 (LIPSLIKHSGDSDSEVREASYAAMGAMMRAIGEKPSLQL). The tract at residues 544-603 (APPAAAPPKKTAPPKKQPEDEEVVEEEDEPLKPPPGDKKKKVPVKENEENEPPVVAPKAE) is disordered. Positions 562–572 (EDEEVVEEEDE) are enriched in acidic residues. The segment at 602 to 867 (AELLLSDNED…VEERIKRTGV (266 aa)) is TOG 3. HEAT repeat units lie at residues 706–743 (IKVLELCKVIVELIRDTETPMSQEEVSAFVPYLLLKTG), 764–801 (VGPLKMTPMLLDALKSKNARQRSECLLVIEYYITNAGI), and 804–841 (LKSLSVEKTVAPFVGDKDVNVRNAAINVLVACFKFEGD). A disordered region spans residues 867-914 (VKPGSGVVTSPPTGGPKILVPQQQGSVVRRPASRSRTREPEPEEVQSD).

This sequence belongs to the TOG/XMAP215 family. In terms of assembly, interacts with tac-1 to form a heterodimer.

It is found in the cytoplasm. The protein localises to the cytoskeleton. It localises to the spindle pole. The protein resides in the microtubule organizing center. Its subcellular location is the centrosome. Functionally, plays a major role in organizing microtubules and spindle poles during mitosis and meiosis in one-cell stage embryos. Required for default nucleus positioning in oocytes. This chain is Zygote defective protein 9, found in Caenorhabditis elegans.